The primary structure comprises 321 residues: Leucine-rich repeat-containing protein 46 (321 aa).

LRR repeat units lie at residues 45 to 66, 67 to 88, 89 to 110, and 111 to 132; these read ELQT…EGLK, NLHS…ACVP, SLRF…LDLP, and CLQF…EFPQ. Positions 142–184 constitute an LRRCT domain; that stretch reads NSCTNQDSYRELVIEALPLLLDLDGQPVMERWISDEEDEASSE. 2 positions are modified to phosphoserine: Ser175 and Ser182. Residues 198–222 are a coiled coil; the sequence is RGFLKELEQELSRHREHRQQAALTQ. Positions 235–321 are disordered; sequence NLPLLPGVPM…TKTMAKRSKK (87 aa).

The protein resides in the cell projection. It localises to the cilium. Its subcellular location is the flagellum. Its function is as follows. Required for normal spermatogenesis and male fertility. Plays an important role in sperm flagellum biogenesis. In Macaca fascicularis (Crab-eating macaque), this protein is Leucine-rich repeat-containing protein 46 (LRRC46).